The primary structure comprises 581 residues: DNA primase (581 aa).

A CHC2-type zinc finger spans residues 40–64; that stretch reads CPFHNEKTPSFTVNGEKQFYHCFGC. The Toprim domain maps to 259-341; sequence NRLLVVEGYM…GRQLRFMFLP (83 aa). 3 residues coordinate Mg(2+): Glu-265, Asp-309, and Asp-311.

Belongs to the DnaG primase family. Monomer. Interacts with DnaB. Requires Zn(2+) as cofactor. Mg(2+) is required as a cofactor.

It catalyses the reaction ssDNA + n NTP = ssDNA/pppN(pN)n-1 hybrid + (n-1) diphosphate.. RNA polymerase that catalyzes the synthesis of short RNA molecules used as primers for DNA polymerase during DNA replication. The polypeptide is DNA primase (Shigella flexneri).